We begin with the raw amino-acid sequence, 76 residues long: Ovarian cancer-related protein 1 (76 aa).

The sequence is that of Ovarian cancer-related protein 1 (OCR1) from Homo sapiens (Human).